We begin with the raw amino-acid sequence, 93 residues long: Translation initiation factor IF-1 (93 aa).

One can recognise an S1-like domain in the interval 1–72 (MAKEELIQFE…EKGRLIFRHK (72 aa)). The interval 70-93 (RHKDERPGGGPPRGAPPRGQFRRR) is disordered.

The protein belongs to the IF-1 family. As to quaternary structure, component of the 30S ribosomal translation pre-initiation complex which assembles on the 30S ribosome in the order IF-2 and IF-3, IF-1 and N-formylmethionyl-tRNA(fMet); mRNA recruitment can occur at any time during PIC assembly.

It localises to the cytoplasm. Functionally, one of the essential components for the initiation of protein synthesis. Stabilizes the binding of IF-2 and IF-3 on the 30S subunit to which N-formylmethionyl-tRNA(fMet) subsequently binds. Helps modulate mRNA selection, yielding the 30S pre-initiation complex (PIC). Upon addition of the 50S ribosomal subunit IF-1, IF-2 and IF-3 are released leaving the mature 70S translation initiation complex. The sequence is that of Translation initiation factor IF-1 from Rhodopseudomonas palustris (strain BisB18).